The following is a 188-amino-acid chain: uncharacterized protein (188 aa).

This is an uncharacterized protein from Haemophilus influenzae (strain ATCC 51907 / DSM 11121 / KW20 / Rd).